The sequence spans 220 residues: Phosphopantothenoylcysteine decarboxylase (220 aa).

Residues 29 to 31 (GSV) and 54 to 56 (TKA) contribute to the FMN site. Histidine 91 (proton donor) is an active-site residue. FMN is bound by residues 107 to 110 (SANT) and alanine 141. The N-[(R)-4-phosphopantothenoyl]-L-cysteine site is built by asparagine 143, arginine 173, and alanine 175. Cysteine 176 (proton donor) is an active-site residue. Methionine 184 serves as a coordination point for N-[(R)-4-phosphopantothenoyl]-L-cysteine.

It belongs to the HFCD (homooligomeric flavin containing Cys decarboxylase) superfamily. As to quaternary structure, forms homotrimers. Interacts with HIP1. Interacts with HD1 in the dark. FMN is required as a cofactor. As to expression, expressed in root meristem, shoot apical meristem (SAM), intercalary meristem, floral meristem, embryo and tip of the coleoptile before true leaf emergence.

Its subcellular location is the nucleus. The catalysed reaction is N-[(R)-4-phosphopantothenoyl]-L-cysteine + H(+) = (R)-4'-phosphopantetheine + CO2. It functions in the pathway cofactor biosynthesis; coenzyme A biosynthesis; CoA from (R)-pantothenate: step 3/5. Functionally, catalyzes the decarboxylation of 4'-phosphopantothenoylcysteine to 4'-phosphopantetheine, a key step in coenzyme A biosynthesis. Involved in salt and osmotic tolerance, and light-regulated plant growth. Trimerization of HAL3 recruits and activates the E3 ubiquitin-protein ligase HIP1, which leads to the degradation of cell cycle suppressors, resulting in enhancement of cell division and plant growth. HAL3 function in cell division seems to be independent from its PPC decarboxylase activity. Acts as a positive regulator of flowering by binding to HD1 in the dark. The sequence is that of Phosphopantothenoylcysteine decarboxylase from Oryza sativa subsp. japonica (Rice).